We begin with the raw amino-acid sequence, 746 residues long: Bud site selection protein 7 (746 aa).

The CHS5-binding stretch occupies residues 733–746 (LNFFTTCTIGCYDA).

The protein belongs to the CHAPS family. As to quaternary structure, component of the CHS5/6 complex composed of the 4 CHAPS proteins BCH1, BCH2v, BUD7, and CHS6 as well as at least CHS5 and GTP-bound ARF1. The complex interacts with the cargo protein CHS3.

It localises to the golgi apparatus. Its subcellular location is the trans-Golgi network membrane. Its function is as follows. Member of the CHS5-ARF1P-binding proteins (CHAPS) which mediates export of specific cargo proteins, including chitin synthase CHS3. May be involved in positioning the proximal bud pole signal. The sequence is that of Bud site selection protein 7 (BUD7) from Saccharomyces cerevisiae (strain ATCC 204508 / S288c) (Baker's yeast).